We begin with the raw amino-acid sequence, 454 residues long: Protein IQ-DOMAIN 1 (454 aa).

Positions 103 to 113 (GKSKEEAAAIL) are calmodulin-binding. The 30-residue stretch at 107-136 (EEAAAILIQSTFRGHLARRESQVMRGQERL) folds into the IQ domain. The tract at residues 272–454 (WESSEKEQNT…KGVLKAERTP (183 aa)) is disordered. Residues 280-328 (NTTNNDNSSVKNSTNRNSQGGETAKSSNRNKLNSSTKPNTPSASSTATR) show a composition bias toward polar residues. A compositionally biased stretch (basic and acidic residues) spans 343–356 (KSSDDEAKSSERNR). Over residues 371-388 (LSSSTARRSSNLIPTTKS) the composition is skewed to polar residues. Over residues 397–412 (TSSRVAVTTSTTEESS) the composition is skewed to low complexity. Residues 421-428 (KKRLSTSA) carry the Nuclear localization signal motif. Basic and acidic residues predominate over residues 442–454 (KVEKGVLKAERTP).

This sequence belongs to the IQD family. In terms of assembly, binds to multiple calmodulin (CaM) in the presence of Ca(2+)(e.g. CaM1 and CaM2) and CaM-like (e.g. CML8 and CML9) proteins. Interacts with KLCR1. Expressed in roots, flowers, stems, siliques, inflorescence stems and whole shoots. Restricted to the vascular bundles.

The protein localises to the nucleus. The protein resides in the nucleolus. Its subcellular location is the cytoplasm. It is found in the cytoskeleton. May be involved in cooperative interactions with calmodulins or calmodulin-like proteins. Modulates expression of glucosinolate pathway genes. May associate with nucleic acids and regulate gene expression at the transcriptional or post-transcriptional level. Recruits KLCR1 and calmodulin proteins to microtubules, thus being a potential scaffold in cellular signaling and trafficking. This chain is Protein IQ-DOMAIN 1, found in Arabidopsis thaliana (Mouse-ear cress).